Consider the following 285-residue polypeptide: MINKTLLQKRFNRAAVSYDQYANVQKKMARHLLSQLEKRYSKAAAIRILELGCGTGYITEKLVHLFPNAQITAIDFAESMIAVAKQRRHVDEVTFRCEDIEKLILDDFYDVIISNATFQWLNDLQVSLVKLYKHLAGEGILLFSTFGNRTFQELHRAFERAKEEKNIKSHVSIGQRLFTKAQLQNICSIKKGNVHVSETCYIEKFTHVRDFFKSIRKVGATNSNEDTYCQSPSLFRAMLRIYERDFTKEGEIIATYHALFAHIEKEGKRRNETNTNKSRLEENCV.

Belongs to the methyltransferase superfamily.

The enzyme catalyses malonyl-[ACP] + S-adenosyl-L-methionine = malonyl-[ACP] methyl ester + S-adenosyl-L-homocysteine. The protein operates within cofactor biosynthesis; biotin biosynthesis. Functionally, converts the free carboxyl group of a malonyl-thioester to its methyl ester by transfer of a methyl group from S-adenosyl-L-methionine (SAM). It allows to synthesize pimeloyl-ACP via the fatty acid synthetic pathway. This Bacillus cytotoxicus (strain DSM 22905 / CIP 110041 / 391-98 / NVH 391-98) protein is Malonyl-[acyl-carrier protein] O-methyltransferase.